The following is a 93-amino-acid chain: DNA-directed RNA polymerase subunit Rpo11 (93 aa).

The protein belongs to the archaeal Rpo11/eukaryotic RPB11/RPC19 RNA polymerase subunit family. As to quaternary structure, part of the RNA polymerase complex.

The protein localises to the cytoplasm. The enzyme catalyses RNA(n) + a ribonucleoside 5'-triphosphate = RNA(n+1) + diphosphate. Functionally, DNA-dependent RNA polymerase (RNAP) catalyzes the transcription of DNA into RNA using the four ribonucleoside triphosphates as substrates. This Sulfurisphaera tokodaii (strain DSM 16993 / JCM 10545 / NBRC 100140 / 7) (Sulfolobus tokodaii) protein is DNA-directed RNA polymerase subunit Rpo11.